Here is an 848-residue protein sequence, read N- to C-terminus: Protein translocase subunit SecA (848 aa).

ATP-binding positions include Gln-86, 104–108, and Asp-508; that span reads GEGKT. Positions 833, 835, 844, and 845 each coordinate Zn(2+).

This sequence belongs to the SecA family. In terms of assembly, monomer and homodimer. Part of the essential Sec protein translocation apparatus which comprises SecA, SecYEG and auxiliary proteins SecDF. Other proteins may also be involved. The cofactor is Zn(2+).

Its subcellular location is the cell membrane. The protein resides in the cytoplasm. The catalysed reaction is ATP + H2O + cellular proteinSide 1 = ADP + phosphate + cellular proteinSide 2.. Part of the Sec protein translocase complex. Interacts with the SecYEG preprotein conducting channel. Has a central role in coupling the hydrolysis of ATP to the transfer of proteins into and across the cell membrane, serving as an ATP-driven molecular motor driving the stepwise translocation of polypeptide chains across the membrane. The polypeptide is Protein translocase subunit SecA (Caldicellulosiruptor saccharolyticus (strain ATCC 43494 / DSM 8903 / Tp8T 6331)).